We begin with the raw amino-acid sequence, 348 residues long: D-alanine--D-alanine ligase (348 aa).

The 203-residue stretch at 132 to 334 (KRVLESIGIP…YPDLIEELVT (203 aa)) folds into the ATP-grasp domain. 162–217 (LARLTFPIFVKPANMGSSVGISKAQTKVELRKAIQLALTYDSRVLIEQGVVAREIE) is a binding site for ATP. Mg(2+)-binding residues include Asp-288, Glu-301, and Asn-303.

Belongs to the D-alanine--D-alanine ligase family. Requires Mg(2+) as cofactor. Mn(2+) serves as cofactor.

It localises to the cytoplasm. It catalyses the reaction 2 D-alanine + ATP = D-alanyl-D-alanine + ADP + phosphate + H(+). It participates in cell wall biogenesis; peptidoglycan biosynthesis. Cell wall formation. The protein is D-alanine--D-alanine ligase of Streptococcus pyogenes serotype M6 (strain ATCC BAA-946 / MGAS10394).